The primary structure comprises 167 residues: Large ribosomal subunit protein uL22 (167 aa).

The tract at residues 120 to 167 (GSTATTVEDEAPKAKGAKGAKAKKAPAKKAAAKKAPAKKFAGKKTAKR) is disordered. Basic residues predominate over residues 134-167 (KGAKGAKAKKAPAKKAAAKKAPAKKFAGKKTAKR).

It belongs to the universal ribosomal protein uL22 family. As to quaternary structure, part of the 50S ribosomal subunit.

Functionally, this protein binds specifically to 23S rRNA; its binding is stimulated by other ribosomal proteins, e.g. L4, L17, and L20. It is important during the early stages of 50S assembly. It makes multiple contacts with different domains of the 23S rRNA in the assembled 50S subunit and ribosome. Its function is as follows. The globular domain of the protein is located near the polypeptide exit tunnel on the outside of the subunit, while an extended beta-hairpin is found that lines the wall of the exit tunnel in the center of the 70S ribosome. The polypeptide is Large ribosomal subunit protein uL22 (Koribacter versatilis (strain Ellin345)).